We begin with the raw amino-acid sequence, 257 residues long: UPF0246 protein Lcho_2652 (257 aa).

The protein belongs to the UPF0246 family.

In Leptothrix cholodnii (strain ATCC 51168 / LMG 8142 / SP-6) (Leptothrix discophora (strain SP-6)), this protein is UPF0246 protein Lcho_2652.